A 340-amino-acid polypeptide reads, in one-letter code: Ribosomal RNA large subunit methyltransferase F (340 aa).

Belongs to the methyltransferase superfamily. METTL16/RlmF family.

It localises to the cytoplasm. The catalysed reaction is adenosine(1618) in 23S rRNA + S-adenosyl-L-methionine = N(6)-methyladenosine(1618) in 23S rRNA + S-adenosyl-L-homocysteine + H(+). Its function is as follows. Specifically methylates the adenine in position 1618 of 23S rRNA. The protein is Ribosomal RNA large subunit methyltransferase F of Dechloromonas aromatica (strain RCB).